Consider the following 129-residue polypeptide: MKTVQFCFLFCCWKAICCNSCELTNITIAIENEECHFCISINTTWCAGYCYTRDLVFKDPATPNIQTTCTFKELVYETVRVPGCAHHADSLYTYPVATQCHCGKCDSDSTDCTTQGLGPDYCSFSEMKE.

An N-terminal signal peptide occupies residues 1-20; the sequence is MKTVQFCFLFCCWKAICCNS. Cystine bridges form between cysteine 21-cysteine 69, cysteine 35-cysteine 84, cysteine 38-cysteine 122, cysteine 46-cysteine 100, cysteine 50-cysteine 102, and cysteine 105-cysteine 112. N-linked (GlcNAc...) asparagine glycans are attached at residues asparagine 25 and asparagine 42.

This sequence belongs to the glycoprotein hormones subunit beta family. In terms of assembly, heterodimer. The active follitropin is a heterodimer composed of an alpha chain/CGA shared with other hormones and a unique beta chain/FSHB shown here.

The protein resides in the secreted. Functionally, together with the alpha chain CGA constitutes follitropin, the follicle-stimulating hormone, and provides its biological specificity to the hormone heterodimer. Binds FSHR, a G protein-coupled receptor, on target cells to activate downstream signaling pathways. Follitropin is involved in follicle development and spermatogenesis in reproductive organs. The chain is Follitropin subunit beta (FSHB) from Saimiri boliviensis boliviensis (Bolivian squirrel monkey).